The chain runs to 621 residues: DNA mismatch repair protein MutL (621 aa).

Belongs to the DNA mismatch repair MutL/HexB family.

This protein is involved in the repair of mismatches in DNA. It is required for dam-dependent methyl-directed DNA mismatch repair. May act as a 'molecular matchmaker', a protein that promotes the formation of a stable complex between two or more DNA-binding proteins in an ATP-dependent manner without itself being part of a final effector complex. The sequence is that of DNA mismatch repair protein MutL from Xylella fastidiosa (strain M12).